We begin with the raw amino-acid sequence, 159 residues long: Sperm acrosome-associated protein 5 (159 aa).

Positions 1–21 (MKAWGTVVVTLATLMVVTVDA) are cleaved as a signal peptide. Residues 22–150 (KIYERCELAA…SEWLKGCDMH (129 aa)) form the C-type lysozyme domain. Intrachain disulfides connect C27–C147, C51–C135, C85–C100, and C96–C114. E56 is a catalytic residue.

This sequence belongs to the glycosyl hydrolase 22 family.

Its subcellular location is the secreted. The enzyme catalyses Hydrolysis of (1-&gt;4)-beta-linkages between N-acetylmuramic acid and N-acetyl-D-glucosamine residues in a peptidoglycan and between N-acetyl-D-glucosamine residues in chitodextrins.. This Homo sapiens (Human) protein is Sperm acrosome-associated protein 5 (SPACA5).